The following is a 215-amino-acid chain: MFAVIFETRPQPSQFDTYLTIAKSLRPELANIDGFIENIRYKSLSRPGWILSLSFWRDEKSLVRWRTTATHHMAQEKGRDGVLEDYHLRVGQVTASVRSNEVKRVETVDAREQDDVTAVGAAKTVQLVRFQMDRGAGIDAAAGKLGLNPEEPRGLLAWDIMEAVLSPGDMILLASWETGSSSVSIPGADSDEVQVLRDYGKYDRREAPQFYPPAS.

The 89-residue stretch at 2–90 folds into the ABM domain; the sequence is FAVIFETRPQ…GVLEDYHLRV (89 aa).

It localises to the endoplasmic reticulum. Its subcellular location is the secreted. It catalyses the reaction jasmonate + NADPH + O2 + H(+) = (1R,2R)-12-hydroxyjasmonate + NADP(+) + H2O. Monooxygenase that converts the endogenous (and likely the host) jasmonate (JA) to its hydroxylated derivative 12-hydroxyjasmonate (12OH-JA), also known as tuberonic acid, a compound that attenuates or disables jasmonate-based host innate immunity and which is essential for proper initiation and elaboration of the blast disease in rice. ABM, together with a polyketide synthase MGG_04775 and the esterase MGG_04774, share the secondary metabolism gene cluster with ABC transporter ABC3, and therefore may also be involved in the synthesis of other important metabolites such as the ABC3 transporter efflux substrate (ATS) and/or additional polyketides. The sequence is that of Jasmonate monooxygenase ABM from Pyricularia oryzae (strain 70-15 / ATCC MYA-4617 / FGSC 8958) (Rice blast fungus).